We begin with the raw amino-acid sequence, 232 residues long: Sugar fermentation stimulation protein homolog (232 aa).

This sequence belongs to the SfsA family.

The sequence is that of Sugar fermentation stimulation protein homolog from Geobacter metallireducens (strain ATCC 53774 / DSM 7210 / GS-15).